A 700-amino-acid polypeptide reads, in one-letter code: Beta-galactosidase Bga (700 aa).

Arg103 serves as a coordination point for substrate. Cys107 contacts Zn(2+). Asn141 provides a ligand contact to substrate. The active-site Proton donor is Glu142. Zn(2+) is bound by residues Cys151, Cys153, and Cys156. Residue Glu312 is the Nucleophile of the active site. Substrate-binding positions include Trp320 and 360-363 (EQYH). The segment covering 648-658 (DPESLAVDDTD) has biased composition (acidic residues). Residues 648–674 (DPESLAVDDTDRDGFDPMADDDKDSSA) form a disordered region.

This sequence belongs to the glycosyl hydrolase 42 family.

It carries out the reaction Hydrolysis of terminal non-reducing beta-D-galactose residues in beta-D-galactosides.. Requires 4 M NaCl or KCl for maximal activity. Cleaves o-nitrophenyl-beta-D-galactopyranoside (ONPG) in vitro. The sequence is that of Beta-galactosidase Bga from Halorubrum lacusprofundi (strain ATCC 49239 / DSM 5036 / JCM 8891 / ACAM 34).